Here is a 270-residue protein sequence, read N- to C-terminus: Protein-ADP-ribose hydrolase (270 aa).

The Macro domain occupies 73–267 (VSVKDCQKTN…LYDTYLQKEN (195 aa)). Positions 92, 93, and 106 each coordinate ADP-D-ribose. Cys-112, His-117, and Cys-119 together coordinate Zn(2+). Residues Cys-119, Ile-120, Asp-121, Ser-212, Thr-213, Gly-214, Glu-215, and Phe-216 each contribute to the ADP-D-ribose site.

The protein belongs to the MacroD-type family. Zn-Macro subfamily. It depends on Zn(2+) as a cofactor.

It catalyses the reaction 4-O-(ADP-D-ribosyl)-L-aspartyl-[protein] + H2O = L-aspartyl-[protein] + ADP-D-ribose + H(+). Its function is as follows. ADP-ribosylhydrolase that specifically reverses the SirTM-mediated mono-ADP-ribosylation at an asparatate residue of GcvH-L, by releasing ADP-ribose from the target protein. May play a role in the regulation of the response to host-induced oxidative stress. The protein is Protein-ADP-ribose hydrolase of Streptococcus pyogenes serotype M3 (strain ATCC BAA-595 / MGAS315).